Here is a 443-residue protein sequence, read N- to C-terminus: ATP-dependent protease ATPase subunit HslU (443 aa).

ATP-binding positions include Ile-18, 60–65, Asp-256, Glu-321, and Arg-393; that span reads GVGKTE.

The protein belongs to the ClpX chaperone family. HslU subfamily. A double ring-shaped homohexamer of HslV is capped on each side by a ring-shaped HslU homohexamer. The assembly of the HslU/HslV complex is dependent on binding of ATP.

It is found in the cytoplasm. In terms of biological role, ATPase subunit of a proteasome-like degradation complex; this subunit has chaperone activity. The binding of ATP and its subsequent hydrolysis by HslU are essential for unfolding of protein substrates subsequently hydrolyzed by HslV. HslU recognizes the N-terminal part of its protein substrates and unfolds these before they are guided to HslV for hydrolysis. In Buchnera aphidicola subsp. Acyrthosiphon pisum (strain 5A), this protein is ATP-dependent protease ATPase subunit HslU.